A 247-amino-acid chain; its full sequence is Killer cell lectin-like receptor subfamily I member 2 (247 aa).

Residues 1 to 12 (MPRKKQNERGTN) show a composition bias toward basic and acidic residues. The segment at 1-39 (MPRKKQNERGTNKQEIINIETKSSTFQEKQRQSKTDQIS) is disordered. Residues 1-79 (MPRKKQNERG…GTDPWLTTWR (79 aa)) lie on the Cytoplasmic side of the membrane. Residues 80–100 (IITVILGTSCIILVTKVGFLI) form a helical membrane-spanning segment. At 101–247 (PNLFSRGEKR…KAYTCEFNLQ (147 aa)) the chain is on the extracellular side. N-linked (GlcNAc...) asparagine glycosylation is found at asparagine 125, asparagine 196, asparagine 212, and asparagine 218. Positions 139 to 243 (FGNNFYLFFR…CSSKKAYTCE (105 aa)) constitute a C-type lectin domain. Intrachain disulfides connect cysteine 160–cysteine 242 and cysteine 221–cysteine 234.

Heterodimer with KLRE1. Expressed in natural killer (NK) cells.

The protein resides in the cell membrane. Its function is as follows. Lectin-like receptor for natural killer (NK) cells. Heterodimer formation with KLRE1 mediates NK cell cytolytic activity. The polypeptide is Killer cell lectin-like receptor subfamily I member 2 (Rattus norvegicus (Rat)).